The chain runs to 105 residues: Serine protease inhibitor Kazal-type 6 (105 aa).

The first 23 residues, 1–23, serve as a signal peptide directing secretion; it reads MKVAGVFLLLSLALLCFFSGEFS. The residue at position 24 (glutamine 24) is a Pyrrolidone carboxylic acid. Residues 49–105 enclose the Kazal-like domain; that stretch reads RLFQINCGEFRDPKVFCTRESDPLCGSDGQTYGNKCAFCKALEKSSGKINLKHRGKC. 3 cysteine pairs are disulfide-bonded: cysteine 55–cysteine 87, cysteine 65–cysteine 84, and cysteine 73–cysteine 105.

The protein localises to the secreted. Its function is as follows. Serine protease inhibitor selective for kallikreins. Efficiently inhibits KLK4, KLK5, KLK6, KLK7, KLK12, KLK13 and KLK14. Doesn't inhibit KLK8. In Rattus norvegicus (Rat), this protein is Serine protease inhibitor Kazal-type 6 (Spink6).